Reading from the N-terminus, the 783-residue chain is Aconitate hydratase, mitochondrial (783 aa).

Residues 1–25 (MITTRLARMGALAPKSRLLFGTRGM) constitute a mitochondrion transit peptide. Substrate-binding positions include glutamine 102 and 195–197 (DSH). Positions 388, 451, and 454 each coordinate [4Fe-4S] cluster. The substrate site is built by arginine 477 and arginine 482. Positions 524 to 555 (EFKLKAPTGDGLPSRGYDPGRDTYQAPPTDRS) are disordered. Substrate contacts are provided by residues arginine 610 and 673 to 674 (SR).

Belongs to the aconitase/IPM isomerase family. [4Fe-4S] cluster is required as a cofactor.

It localises to the mitochondrion. It carries out the reaction citrate = D-threo-isocitrate. The catalysed reaction is (2R)-homocitrate = cis-homoaconitate + H2O. It participates in carbohydrate metabolism; tricarboxylic acid cycle; isocitrate from oxaloacetate: step 2/2. Its pathway is amino-acid biosynthesis; L-lysine biosynthesis via AAA pathway; L-alpha-aminoadipate from 2-oxoglutarate: step 2/5. Functionally, catalyzes the isomerization of citrate to isocitrate via cis-aconitate, a step in the citric acid cycle. Also catalyzes the reversible dehydration of (R)-homocitrate to cis-homoaconitate, a step in the alpha-aminoadipate pathway for lysine biosynthesis. The sequence is that of Aconitate hydratase, mitochondrial (acoA) from Emericella nidulans (strain FGSC A4 / ATCC 38163 / CBS 112.46 / NRRL 194 / M139) (Aspergillus nidulans).